The primary structure comprises 115 residues: Holo-[acyl-carrier-protein] synthase (115 aa).

Mg(2+) is bound by residues Asp5 and Glu50.

Belongs to the P-Pant transferase superfamily. AcpS family. The cofactor is Mg(2+).

Its subcellular location is the cytoplasm. The enzyme catalyses apo-[ACP] + CoA = holo-[ACP] + adenosine 3',5'-bisphosphate + H(+). Functionally, transfers the 4'-phosphopantetheine moiety from coenzyme A to a Ser of acyl-carrier-protein. The polypeptide is Holo-[acyl-carrier-protein] synthase (Campylobacter fetus subsp. fetus (strain 82-40)).